The sequence spans 400 residues: 2-[(L-alanin-3-ylcarbamoyl)methyl]-2-hydroxybutanedioate decarboxylase (400 aa).

N6-(pyridoxal phosphate)lysine is present on Lys50. Pyridoxal 5'-phosphate-binding positions include Gly228 and 266 to 269 (ECGR). Cys344 (proton donor) is an active-site residue. Tyr373 lines the pyridoxal 5'-phosphate pocket.

This sequence belongs to the Orn/Lys/Arg decarboxylase class-II family. Homodimer. Requires pyridoxal 5'-phosphate as cofactor.

It carries out the reaction 2-[(L-alanin-3-ylcarbamoyl)methyl]-2-hydroxybutanedioate + H(+) = 2-[(2-aminoethylcarbamoyl)methyl]-2-hydroxybutanedioate + CO2. Its pathway is siderophore biosynthesis. Catalyzes the decarboxylation of citryl-L-2,3-diaminopropionic acid to citryl-diaminoethane, the second step in staphyloferrin B biosynthesis. This chain is 2-[(L-alanin-3-ylcarbamoyl)methyl]-2-hydroxybutanedioate decarboxylase, found in Staphylococcus aureus (strain NCTC 8325 / PS 47).